The following is a 340-amino-acid chain: UDP-N-acetylglucosamine--N-acetylmuramyl-(pentapeptide) pyrophosphoryl-undecaprenol N-acetylglucosamine transferase (340 aa).

UDP-N-acetyl-alpha-D-glucosamine contacts are provided by residues 15–17 (TGG), N127, S184, I230, and Q275.

The protein belongs to the glycosyltransferase 28 family. MurG subfamily.

The protein resides in the cell inner membrane. The catalysed reaction is di-trans,octa-cis-undecaprenyl diphospho-N-acetyl-alpha-D-muramoyl-L-alanyl-D-glutamyl-meso-2,6-diaminopimeloyl-D-alanyl-D-alanine + UDP-N-acetyl-alpha-D-glucosamine = di-trans,octa-cis-undecaprenyl diphospho-[N-acetyl-alpha-D-glucosaminyl-(1-&gt;4)]-N-acetyl-alpha-D-muramoyl-L-alanyl-D-glutamyl-meso-2,6-diaminopimeloyl-D-alanyl-D-alanine + UDP + H(+). The protein operates within cell wall biogenesis; peptidoglycan biosynthesis. Its function is as follows. Cell wall formation. Catalyzes the transfer of a GlcNAc subunit on undecaprenyl-pyrophosphoryl-MurNAc-pentapeptide (lipid intermediate I) to form undecaprenyl-pyrophosphoryl-MurNAc-(pentapeptide)GlcNAc (lipid intermediate II). This is UDP-N-acetylglucosamine--N-acetylmuramyl-(pentapeptide) pyrophosphoryl-undecaprenol N-acetylglucosamine transferase from Vesicomyosocius okutanii subsp. Calyptogena okutanii (strain HA).